A 382-amino-acid chain; its full sequence is Bifunctional enzyme IspD/IspF (382 aa).

Residues 1–225 (MTFSVVIVAA…EHLAGVARVT (225 aa)) are 2-C-methyl-D-erythritol 4-phosphate cytidylyltransferase. The 2-C-methyl-D-erythritol 2,4-cyclodiphosphate synthase stretch occupies residues 226-382 (RVGQGFDAHR…SAVVAVETPA (157 aa)). The a divalent metal cation site is built by Asp232 and His234. 4-CDP-2-C-methyl-D-erythritol 2-phosphate-binding positions include 232–234 (DAH) and 258–259 (HS). Residue His266 coordinates a divalent metal cation. Residues 280 to 282 (DIG), 356 to 359 (TTTE), Phe363, and Arg366 contribute to the 4-CDP-2-C-methyl-D-erythritol 2-phosphate site.

It in the N-terminal section; belongs to the IspD/TarI cytidylyltransferase family. IspD subfamily. This sequence in the C-terminal section; belongs to the IspF family. The cofactor is a divalent metal cation.

The catalysed reaction is 2-C-methyl-D-erythritol 4-phosphate + CTP + H(+) = 4-CDP-2-C-methyl-D-erythritol + diphosphate. It catalyses the reaction 4-CDP-2-C-methyl-D-erythritol 2-phosphate = 2-C-methyl-D-erythritol 2,4-cyclic diphosphate + CMP. It participates in isoprenoid biosynthesis; isopentenyl diphosphate biosynthesis via DXP pathway; isopentenyl diphosphate from 1-deoxy-D-xylulose 5-phosphate: step 2/6. It functions in the pathway isoprenoid biosynthesis; isopentenyl diphosphate biosynthesis via DXP pathway; isopentenyl diphosphate from 1-deoxy-D-xylulose 5-phosphate: step 4/6. In terms of biological role, bifunctional enzyme that catalyzes the formation of 4-diphosphocytidyl-2-C-methyl-D-erythritol from CTP and 2-C-methyl-D-erythritol 4-phosphate (MEP) (IspD), and catalyzes the conversion of 4-diphosphocytidyl-2-C-methyl-D-erythritol 2-phosphate (CDP-ME2P) to 2-C-methyl-D-erythritol 2,4-cyclodiphosphate (ME-CPP) with a corresponding release of cytidine 5-monophosphate (CMP) (IspF). This chain is Bifunctional enzyme IspD/IspF, found in Caulobacter vibrioides (strain ATCC 19089 / CIP 103742 / CB 15) (Caulobacter crescentus).